A 313-amino-acid chain; its full sequence is 4-hydroxy-3-methylbut-2-enyl diphosphate reductase (313 aa).

Cys-20 is a [4Fe-4S] cluster binding site. Residues His-49 and His-82 each contribute to the (2E)-4-hydroxy-3-methylbut-2-enyl diphosphate site. Residues His-49 and His-82 each contribute to the dimethylallyl diphosphate site. Residues His-49 and His-82 each coordinate isopentenyl diphosphate. Cys-104 is a binding site for [4Fe-4S] cluster. His-132 is a binding site for (2E)-4-hydroxy-3-methylbut-2-enyl diphosphate. His-132 is a binding site for dimethylallyl diphosphate. Residue His-132 coordinates isopentenyl diphosphate. The active-site Proton donor is Glu-134. Residue Thr-172 participates in (2E)-4-hydroxy-3-methylbut-2-enyl diphosphate binding. Residue Cys-201 participates in [4Fe-4S] cluster binding. Residues Ser-229, Ser-230, Asn-231, and Ser-273 each coordinate (2E)-4-hydroxy-3-methylbut-2-enyl diphosphate. Residues Ser-229, Ser-230, Asn-231, and Ser-273 each contribute to the dimethylallyl diphosphate site. Isopentenyl diphosphate contacts are provided by Ser-229, Ser-230, Asn-231, and Ser-273.

It belongs to the IspH family. It depends on [4Fe-4S] cluster as a cofactor.

The catalysed reaction is isopentenyl diphosphate + 2 oxidized [2Fe-2S]-[ferredoxin] + H2O = (2E)-4-hydroxy-3-methylbut-2-enyl diphosphate + 2 reduced [2Fe-2S]-[ferredoxin] + 2 H(+). It catalyses the reaction dimethylallyl diphosphate + 2 oxidized [2Fe-2S]-[ferredoxin] + H2O = (2E)-4-hydroxy-3-methylbut-2-enyl diphosphate + 2 reduced [2Fe-2S]-[ferredoxin] + 2 H(+). The protein operates within isoprenoid biosynthesis; dimethylallyl diphosphate biosynthesis; dimethylallyl diphosphate from (2E)-4-hydroxy-3-methylbutenyl diphosphate: step 1/1. It participates in isoprenoid biosynthesis; isopentenyl diphosphate biosynthesis via DXP pathway; isopentenyl diphosphate from 1-deoxy-D-xylulose 5-phosphate: step 6/6. Catalyzes the conversion of 1-hydroxy-2-methyl-2-(E)-butenyl 4-diphosphate (HMBPP) into a mixture of isopentenyl diphosphate (IPP) and dimethylallyl diphosphate (DMAPP). Acts in the terminal step of the DOXP/MEP pathway for isoprenoid precursor biosynthesis. This chain is 4-hydroxy-3-methylbut-2-enyl diphosphate reductase, found in Desulfotalea psychrophila (strain LSv54 / DSM 12343).